The primary structure comprises 307 residues: Elongation factor Ts, mitochondrial (307 aa).

The N-terminal 19 residues, M1–Y19, are a transit peptide targeting the mitochondrion.

The protein belongs to the EF-Ts family.

The protein resides in the mitochondrion. Functionally, associates with the EF-Tu.GDP complex and induces the exchange of GDP to GTP. It remains bound to the aminoacyl-tRNA.EF-Tu.GTP complex up to the GTP hydrolysis stage on the ribosome. The polypeptide is Elongation factor Ts, mitochondrial (Aedes aegypti (Yellowfever mosquito)).